The primary structure comprises 289 residues: Regulator of rDNA transcription protein 5 (289 aa).

Residues 18–105 (TTVYISNLPF…QKLFLKLHVP (88 aa)) form the RRM domain. The segment at 235 to 289 (TNARDPPPAALAEPAPAPAPVEPAEQVQEGQDNAETNDVPPPPASSSDRPTVAAT) is disordered. Residues 239–255 (DPPPAALAEPAPAPAPV) are compositionally biased toward pro residues. Polar residues predominate over residues 279–289 (SSSDRPTVAAT).

The protein belongs to the RRT5 family.

In terms of biological role, may be involved in the modulation of rDNA transcription. The chain is Regulator of rDNA transcription protein 5 (RRT5) from Saccharomyces cerevisiae (strain RM11-1a) (Baker's yeast).